The chain runs to 56 residues: Mitoregulin (56 aa).

The Mitochondrial matrix segment spans residues 2-9 (ADVSERTL). The chain crosses the membrane as a helical span at residues 10 to 27 (QLSVLVAFASGVLLGWQA). The Mitochondrial intermembrane segment spans residues 28–56 (NRLRRRYLDWRKRRLQDKLAATQKKLDLA).

Interacts with mitochondrial trifunctional enzyme, a heterotetrameric complex composed of 2 HADHA subunits and 2 HADHB subunits. Interacts with cytochrome b5 reductase CYB5R3; the interaction is required to maintain cellular lipid composition and leads to stimulation of mitochondrial respiratory complex I activity. Interacts with ATP synthase subunit ATP5F1B/ATP5B.

The protein localises to the mitochondrion inner membrane. Functionally, positively regulates mitochondrial complex assembly and/or stability. Increases mitochondrial membrane potential while decreasing mitochondrial reactive oxygen species. Increases mitochondrial respiration rate. Increased mitochondrial respiratory activity promotes myogenic differentiation which facilitates muscle growth and regeneration. Increases mitochondrial calcium retention capacity. Plays a role in maintenance of cellular lipid composition through its interaction with cytochrome b5 reductase CYB5R3 which is required for mitochondrial respiratory complex I activity. Interacts with the mitochondrial trifunctional enzyme complex (MTE) and enhances fatty acid beta-oxidation. Not required for MTE formation or stability. Modulates triglyceride clearance in adipocytes through its role in regulating fatty acid beta-oxidation and lipolysis. The protein is Mitoregulin of Homo sapiens (Human).